Here is a 176-residue protein sequence, read N- to C-terminus: Ribosome rescue factor SmrB (176 aa).

Residues 93-168 enclose the Smr domain; sequence LDLHGYRQSE…GDAALLVLID (76 aa).

The protein belongs to the SmrB family. As to quaternary structure, associates with collided ribosomes, but not with correctly translating polysomes.

Functionally, acts as a ribosome collision sensor. Detects stalled/collided disomes (pairs of ribosomes where the leading ribosome is stalled and a second ribosome has collided with it) and endonucleolytically cleaves mRNA at the 5' boundary of the stalled ribosome. Stalled/collided disomes form a new interface (primarily via the 30S subunits) that binds SmrB. Cleaved mRNA becomes available for tmRNA ligation, leading to ribosomal subunit dissociation and rescue of stalled ribosomes. The polypeptide is Ribosome rescue factor SmrB (Shewanella sp. (strain W3-18-1)).